Here is a 137-residue protein sequence, read N- to C-terminus: Large ribosomal subunit protein uL16 (137 aa).

Belongs to the universal ribosomal protein uL16 family. As to quaternary structure, part of the 50S ribosomal subunit.

Binds 23S rRNA and is also seen to make contacts with the A and possibly P site tRNAs. The sequence is that of Large ribosomal subunit protein uL16 from Lactococcus lactis subsp. cremoris (strain SK11).